Reading from the N-terminus, the 478-residue chain is Cytochrome c-552 (478 aa).

Residues 1–26 (MTRIKINARRIFSLLIPFFFFTSVHA) form the signal peptide. A heme c-binding site is contributed by H94. C122, C125, and K126 together coordinate heme. Residues C160, C163, H164, C209, C212, and H213 each coordinate heme c. Residues E215, Y216, K261, and Q263 each contribute to the Ca(2+) site. Position 216 (Y216) interacts with substrate. Position 264 (H264) interacts with substrate. Heme c is bound by residues H275, C282, C285, H286, H301, C314, C317, H318, and H393.

Belongs to the cytochrome c-552 family. Ca(2+) is required as a cofactor. Requires heme c as cofactor.

The protein localises to the periplasm. The enzyme catalyses 6 Fe(III)-[cytochrome c] + NH4(+) + 2 H2O = 6 Fe(II)-[cytochrome c] + nitrite + 8 H(+). It participates in nitrogen metabolism; nitrate reduction (assimilation). Functionally, catalyzes the reduction of nitrite to ammonia, consuming six electrons in the process. This Escherichia coli O9:H4 (strain HS) protein is Cytochrome c-552.